Consider the following 827-residue polypeptide: Villin-1 (827 aa).

The tract at residues 1 to 126 (MTKLNAQVKG…IRKGGVASGM (126 aa)) is necessary for homodimerization. The tract at residues 1 to 734 (MTKLNAQVKG…YEDLKAELGN (734 aa)) is core. The stretch at 28–107 (QMVPVSSSTY…EVQGNESEAF (80 aa)) is one Gelsolin-like 1 repeat. LPA/PIP2-binding site regions lie at residues 112–119 (KQGIVIRK) and 138–146 (RLLHVKGKR). Gelsolin-like repeat units lie at residues 148–216 (VVAG…GEDE) and 269–342 (EVAT…SAVF). Ser-366 is subject to Phosphoserine. Gelsolin-like repeat units follow at residues 409–489 (DLVP…PHLM), 528–595 (TKAF…ANFW), and 634–707 (TEIP…PPTF). The residue at position 735 (Ser-735) is a Phosphoserine. An HP domain is found at 761 to 827 (SGPLPIFPLE…QNLKKEKGLF (67 aa)). The segment at 816–824 (KQQNLKKEK) is LPA/PIP2-binding site 3.

The protein belongs to the villin/gelsolin family. As to quaternary structure, monomer. Homodimer; homodimerization is necessary for actin-bundling. Associates with F-actin; phosphorylation at tyrosine residues decreases the association with F-actin. Interacts (phosphorylated at C-terminus tyrosine phosphorylation sites) with PLCG1 (via the SH2 domains). Interacts (phosphorylated form) with PLCG1; the interaction is enhanced by hepatocyte growth factor (HGF). Post-translationally, phosphorylated on tyrosine residues by SRC. The unphosphorylated form increases the initial rate of actin-nucleating activity, whereas the tyrosine-phosphorylated form inhibits actin-nucleating activity, enhances actin-bundling activity and enhances actin-severing activity by reducing high Ca(2+) requirements. The tyrosine-phosphorylated form does not regulate actin-capping activity. Tyrosine phosphorylation is essential for cell migration: tyrosine phosphorylation sites in the N-terminus half regulate actin reorganization and cell morphology, whereas tyrosine phosphorylation sites in the C-terminus half regulate cell migration. Tyrosine phosphorylation is induced by epidermal growth factor (EGF) and stimulates cell migration.

It localises to the cytoplasm. The protein resides in the cytoskeleton. It is found in the cell projection. The protein localises to the lamellipodium. Its subcellular location is the ruffle. It localises to the microvillus. The protein resides in the filopodium tip. It is found in the filopodium. Functionally, epithelial cell-specific Ca(2+)-regulated actin-modifying protein that modulates the reorganization of microvillar actin filaments. Plays a role in the actin nucleation, actin filament bundle assembly, actin filament capping and severing. Binds phosphatidylinositol 4,5-bisphosphate (PIP2) and lysophosphatidic acid (LPA); binds LPA with higher affinity than PIP2. Binding to LPA increases its phosphorylation by SRC and inhibits all actin-modifying activities. Binding to PIP2 inhibits actin-capping and -severing activities but enhances actin-bundling activity. Regulates the intestinal epithelial cell morphology, cell invasion, cell migration and apoptosis. Protects against apoptosis induced by dextran sodium sulfate (DSS) in the gastrointestinal epithelium. Appears to regulate cell death by maintaining mitochondrial integrity. Enhances hepatocyte growth factor (HGF)-induced epithelial cell motility, chemotaxis and wound repair. The protein is Villin-1 (VIL1) of Sus scrofa (Pig).